A 167-amino-acid chain; its full sequence is NADH-quinone oxidoreductase subunit I 1 (167 aa).

4Fe-4S ferredoxin-type domains follow at residues 58-88 (LRRYPNGEERCIACKLCEAVCPAQAITIDAE) and 98-127 (TRYDIDMTKCIYCGFCQEACPVDAIVEGPN). Residues Cys68, Cys71, Cys74, Cys78, Cys107, Cys110, Cys113, and Cys117 each coordinate [4Fe-4S] cluster.

Belongs to the complex I 23 kDa subunit family. In terms of assembly, NDH-1 is composed of 14 different subunits. Subunits NuoA, H, J, K, L, M, N constitute the membrane sector of the complex. The cofactor is [4Fe-4S] cluster.

It is found in the cell inner membrane. The enzyme catalyses a quinone + NADH + 5 H(+)(in) = a quinol + NAD(+) + 4 H(+)(out). Its function is as follows. NDH-1 shuttles electrons from NADH, via FMN and iron-sulfur (Fe-S) centers, to quinones in the respiratory chain. The immediate electron acceptor for the enzyme in this species is believed to be ubiquinone. Couples the redox reaction to proton translocation (for every two electrons transferred, four hydrogen ions are translocated across the cytoplasmic membrane), and thus conserves the redox energy in a proton gradient. The protein is NADH-quinone oxidoreductase subunit I 1 of Cereibacter sphaeroides (strain ATCC 17029 / ATH 2.4.9) (Rhodobacter sphaeroides).